We begin with the raw amino-acid sequence, 243 residues long: Trypsin (243 aa).

A signal peptide spans 1 to 15; it reads MKFLLLCVLLGAAAA. A propeptide spans 16–20 (activation peptide); the sequence is FDDDK. The region spanning 21 to 241 is the Peptidase S1 domain; sequence IIGGATCAKS…YNAWIQNTIA (221 aa). Intrachain disulfides connect Cys27-Cys157, Cys45-Cys61, Cys129-Cys230, Cys136-Cys203, Cys168-Cys182, and Cys193-Cys217. His60 acts as the Charge relay system in catalysis. Residues Glu72, Asn74, and Glu82 each coordinate Ca(2+). Asp104 acts as the Charge relay system in catalysis. The active-site Charge relay system is Ser197.

The protein belongs to the peptidase S1 family. Requires Ca(2+) as cofactor.

The protein localises to the secreted. It localises to the extracellular space. The enzyme catalyses Preferential cleavage: Arg-|-Xaa, Lys-|-Xaa.. The sequence is that of Trypsin from Xenopus laevis (African clawed frog).